The chain runs to 109 residues: uncharacterized protein (109 aa).

The first 19 residues, 1–19 (MKKFALLAGLFVFAPMTWA), serve as a signal peptide directing secretion.

This is an uncharacterized protein from Escherichia coli O6:H1 (strain CFT073 / ATCC 700928 / UPEC).